A 136-amino-acid polypeptide reads, in one-letter code: Histone H3 (136 aa).

Positions 1–43 are disordered; it reads MARTKQTARKSTGGKAPRKQLATKAARKSAPASGGVKKPHRFR. K5 carries the post-translational modification N6-methylated lysine. At K10 the chain carries N6-acetyllysine; alternate. Residue K10 is modified to N6-methylated lysine; alternate. S11 is subject to Phosphoserine. T12 is modified (phosphothreonine). An N6-acetyllysine modification is found at K15. N6-acetyllysine; alternate is present on residues K19 and K24. Residues K19 and K24 each carry the N6-methylated lysine; alternate modification. Position 28 is an N6-methylated lysine (K28). The residue at position 29 (S29) is a Phosphoserine. K37 carries the post-translational modification N6-methylated lysine.

The protein belongs to the histone H3 family. In terms of assembly, the nucleosome is a histone octamer containing two molecules each of H2A, H2B, H3 and H4 assembled in one H3-H4 heterotetramer and two H2A-H2B heterodimers. The octamer wraps approximately 147 bp of DNA. Acetylation is generally linked to gene activation. Can be acetylated to form H3K9ac, H3K14ac, H3K18ac and H3K23ac. H3K9ac could compete with H3K9me and prevent gene silencing. H3K9ac is restricted to euchromatin. Post-translationally, methylated to form mainly H3K4me, H3K9me, H3K18me, H3K23me, H3K27me and H3K36me. H3K4me1/2/3, H3K9me3, H3K27me3 and H3K36me1/2/3 are typical marks for euchromatin, whereas heterochromatic chromocenters are enriched in H3K9me1/2 and H3K27me1/2. H2BK143ub1 is probably prerequisite for H3K4me. In terms of processing, can be phosphorylated to form H3S10ph, H3T11ph and H3S28ph.

The protein localises to the nucleus. It localises to the chromosome. Functionally, core component of nucleosome. Nucleosomes wrap and compact DNA into chromatin, limiting DNA accessibility to the cellular machineries which require DNA as a template. Histones thereby play a central role in transcription regulation, DNA repair, DNA replication and chromosomal stability. DNA accessibility is regulated via a complex set of post-translational modifications of histones, also called histone code, and nucleosome remodeling. The polypeptide is Histone H3 (Griffithsia japonica (Red alga)).